The following is a 1311-amino-acid chain: Clustered mitochondria protein homolog (1311 aa).

The span at 1–18 (MAEKTNGAAAPNGAADAP) shows a compositional bias: low complexity. Positions 1–27 (MAEKTNGAAAPNGAADAPKSSPEQAQD) are disordered. The Clu domain maps to 324-568 (DITRTQESFL…RITPLDVSWQ (245 aa)). A TPR 1 repeat occupies 491–525 (IDYGAVDGKDLVATDERFVPQFQKLSKALKVKPHA). The segment covering 606 to 630 (SEVAKRGQAKKDQAAVEEKKEAKAE) has biased composition (basic and acidic residues). 2 disordered regions span residues 606 to 694 (SEVA…SSDR) and 925 to 966 (PAPV…SSTI). The span at 631-661 (SEEDSDSSSEEESSSDESDSEESSSDEDEEE) shows a compositional bias: acidic residues. Residues 665–675 (PKKKSVPKKAA) are compositionally biased toward basic residues. Basic and acidic residues predominate over residues 676 to 694 (KKEEVKEEKKDEKEASSDR). TPR repeat units lie at residues 1034 to 1067 (ARVY…AERT), 1076 to 1109 (LLDY…WKII), and 1118 to 1151 (ITTI…CEVV). Over residues 1276-1286 (LKFIEGTDKQK) the composition is skewed to basic and acidic residues. A disordered region spans residues 1276–1311 (LKFIEGTDKQKKPAAKKRTGRANPKRRGAEPVSTKA). Residues 1287–1301 (KPAAKKRTGRANPKR) show a composition bias toward basic residues.

The protein belongs to the CLU family. As to quaternary structure, may associate with the eukaryotic translation initiation factor 3 (eIF-3) complex.

The protein localises to the cytoplasm. In terms of biological role, mRNA-binding protein involved in proper cytoplasmic distribution of mitochondria. In Pyricularia oryzae (strain 70-15 / ATCC MYA-4617 / FGSC 8958) (Rice blast fungus), this protein is Clustered mitochondria protein homolog.